A 212-amino-acid polypeptide reads, in one-letter code: Uracil phosphoribosyltransferase (212 aa).

Residues Arg-78, Arg-103, and 130-138 each bind 5-phospho-alpha-D-ribose 1-diphosphate; that span reads DPMLATGSS. Uracil contacts are provided by residues Ile-193 and 198-200; that span reads GDA. 5-phospho-alpha-D-ribose 1-diphosphate is bound at residue Asp-199.

This sequence belongs to the UPRTase family. It depends on Mg(2+) as a cofactor.

The catalysed reaction is UMP + diphosphate = 5-phospho-alpha-D-ribose 1-diphosphate + uracil. The protein operates within pyrimidine metabolism; UMP biosynthesis via salvage pathway; UMP from uracil: step 1/1. With respect to regulation, allosterically activated by GTP. Catalyzes the conversion of uracil and 5-phospho-alpha-D-ribose 1-diphosphate (PRPP) to UMP and diphosphate. The sequence is that of Uracil phosphoribosyltransferase from Pseudomonas syringae pv. tomato (strain ATCC BAA-871 / DC3000).